A 352-amino-acid polypeptide reads, in one-letter code: Fe-S cluster assembly protein DRE2 (352 aa).

Over residues 1 to 11 the composition is skewed to polar residues; the sequence is MAPTAVYTQKD. Residues 1–24 are disordered; that stretch reads MAPTAVYTQKDSPSSSQPSSKGPA. The interval 1-196 is N-terminal SAM-like domain; that stretch reads MAPTAVYTQK…TVTSAPSVPL (196 aa). The segment at 196 to 237 is linker; sequence LLLRKRGDPAKKKALWALTTDASASPSTKIDADALLTAEDKA. C243, C257, C260, and C262 together coordinate [2Fe-2S] cluster. A fe-S binding site A region spans residues 243 to 262; the sequence is CAPVDRSAPRRKKACKNCSC. Residues C315, C318, C326, and C329 each coordinate [4Fe-4S] cluster. 2 consecutive short sequence motifs (cx2C motif) follow at residues 315–318 and 326–329; these read CGSC and CAGC. Positions 315–329 are fe-S binding site B; that stretch reads CGSCFLGDAFRCAGC.

The protein belongs to the anamorsin family. In terms of assembly, monomer. Interacts with TAH18. Interacts with MIA40. Requires [2Fe-2S] cluster as cofactor. It depends on [4Fe-4S] cluster as a cofactor.

Its subcellular location is the cytoplasm. It is found in the mitochondrion intermembrane space. In terms of biological role, component of the cytosolic iron-sulfur (Fe-S) protein assembly (CIA) machinery required for the maturation of extramitochondrial Fe-S proteins. Part of an electron transfer chain functioning in an early step of cytosolic Fe-S biogenesis, facilitating the de novo assembly of a [4Fe-4S] cluster on the scaffold complex CFD1-NBP35. Electrons are transferred to DRE2 from NADPH via the FAD- and FMN-containing protein TAH18. TAH18-DRE2 are also required for the assembly of the diferric tyrosyl radical cofactor of ribonucleotide reductase (RNR), probably by providing electrons for reduction during radical cofactor maturation in the catalytic small subunit RNR2. The chain is Fe-S cluster assembly protein DRE2 from Coprinopsis cinerea (strain Okayama-7 / 130 / ATCC MYA-4618 / FGSC 9003) (Inky cap fungus).